The chain runs to 394 residues: Elongation factor Tu (394 aa).

The region spanning 10 to 204 (KPHINIGTIG…AVDDNIPTPE (195 aa)) is the tr-type G domain. Residues 19–26 (GHVDHGKT) form a G1 region. 19-26 (GHVDHGKT) is a GTP binding site. Position 26 (threonine 26) interacts with Mg(2+). The tract at residues 60-64 (GITIN) is G2. A G3 region spans residues 81–84 (DCPG). GTP is bound by residues 81–85 (DCPGH) and 136–139 (NKID). The segment at 136 to 139 (NKID) is G4. The G5 stretch occupies residues 174-176 (SAL).

Belongs to the TRAFAC class translation factor GTPase superfamily. Classic translation factor GTPase family. EF-Tu/EF-1A subfamily. In terms of assembly, monomer.

It localises to the cytoplasm. The enzyme catalyses GTP + H2O = GDP + phosphate + H(+). Its function is as follows. GTP hydrolase that promotes the GTP-dependent binding of aminoacyl-tRNA to the A-site of ribosomes during protein biosynthesis. This chain is Elongation factor Tu, found in Chlamydia trachomatis serovar L2 (strain ATCC VR-902B / DSM 19102 / 434/Bu).